We begin with the raw amino-acid sequence, 140 residues long: Large ribosomal subunit protein uL11 (140 aa).

It belongs to the universal ribosomal protein uL11 family. As to quaternary structure, part of the ribosomal stalk of the 50S ribosomal subunit. Interacts with L10 and the large rRNA to form the base of the stalk. L10 forms an elongated spine to which L12 dimers bind in a sequential fashion forming a multimeric L10(L12)X complex. In terms of processing, one or more lysine residues are methylated.

Functionally, forms part of the ribosomal stalk which helps the ribosome interact with GTP-bound translation factors. The sequence is that of Large ribosomal subunit protein uL11 from Desulforapulum autotrophicum (strain ATCC 43914 / DSM 3382 / VKM B-1955 / HRM2) (Desulfobacterium autotrophicum).